Consider the following 380-residue polypeptide: Elongation factor Ts, mitochondrial (380 aa).

It belongs to the EF-Ts family.

It is found in the mitochondrion. Functionally, associates with the EF-Tu.GDP complex and induces the exchange of GDP to GTP. It remains bound to the aminoacyl-tRNA.EF-Tu.GTP complex up to the GTP hydrolysis stage on the ribosome. This Plasmodium chabaudi chabaudi protein is Elongation factor Ts, mitochondrial.